Here is a 126-residue protein sequence, read N- to C-terminus: uncharacterized protein (126 aa).

The chain crosses the membrane as a helical span at residues 55–77 (MLLINSNLVLSGLLLFIDVYRAA).

It localises to the membrane. This is an uncharacterized protein from Dictyostelium discoideum (Social amoeba).